The chain runs to 246 residues: PF03932 family protein CutC (246 aa).

It belongs to the CutC family.

It localises to the cytoplasm. The protein is PF03932 family protein CutC of Treponema denticola (strain ATCC 35405 / DSM 14222 / CIP 103919 / JCM 8153 / KCTC 15104).